Consider the following 329-residue polypeptide: uncharacterized protein (329 aa).

The 159-residue stretch at 27–185 (PRRASVAVII…IQIDSSRALK (159 aa)) folds into the Nudix hydrolase domain. The next 3 helical transmembrane spans lie at 123–143 (VITSNWGQFPLLLLSSFVFIL), 227–247 (PFLRGITHSIFVDLFIFLSPS), and 303–323 (LTLLVGFLFRLFLVYLLFLII).

The protein resides in the membrane. This is an uncharacterized protein from Schizosaccharomyces pombe (strain 972 / ATCC 24843) (Fission yeast).